A 303-amino-acid polypeptide reads, in one-letter code: 4-diphosphocytidyl-2-C-methyl-D-erythritol kinase (303 aa).

Lys18 is an active-site residue. 111–121 is an ATP binding site; sequence PVASGIGGGSA. The active site involves Asp153.

Belongs to the GHMP kinase family. IspE subfamily.

It catalyses the reaction 4-CDP-2-C-methyl-D-erythritol + ATP = 4-CDP-2-C-methyl-D-erythritol 2-phosphate + ADP + H(+). It functions in the pathway isoprenoid biosynthesis; isopentenyl diphosphate biosynthesis via DXP pathway; isopentenyl diphosphate from 1-deoxy-D-xylulose 5-phosphate: step 3/6. In terms of biological role, catalyzes the phosphorylation of the position 2 hydroxy group of 4-diphosphocytidyl-2C-methyl-D-erythritol. The polypeptide is 4-diphosphocytidyl-2-C-methyl-D-erythritol kinase (Sinorhizobium medicae (strain WSM419) (Ensifer medicae)).